Here is a 114-residue protein sequence, read N- to C-terminus: Secretoglobin family 2B member 2 (114 aa).

An N-terminal signal peptide occupies residues 1-23 (MKGTLLLLALLVTGELGFQRTEA).

It belongs to the secretoglobin family. Expressed in lacrimal gland.

Its subcellular location is the secreted. This Mus musculus (Mouse) protein is Secretoglobin family 2B member 2 (Scgb2b2).